Here is a 371-residue protein sequence, read N- to C-terminus: 4-hydroxyprotoasukamycin monooxygenase (371 aa).

It belongs to the bacterial luciferase oxidoreductase family. FMN serves as cofactor.

The catalysed reaction is 4-hydroxyprotoasukamycin + NADH + O2 + H(+) = asukamycin + NAD(+) + H2O. Its pathway is antibiotic biosynthesis. In terms of biological role, involved in the biosynthesis of the antibiotic asukamycin. Catalyzes the epoxidation of 4-hydroxyprotoasukamycin to the final product, asukamycin. Can also convert some 4-hydroxyprotoasukamycin derivatives to their asukamycin derivatives, but cannot use protoasukamycin as substrate. Can also use NADPH, but catalytic efficiency is 20-fold higher with NADH. The protein is 4-hydroxyprotoasukamycin monooxygenase of Streptomyces nodosus subsp. asukaensis.